A 214-amino-acid polypeptide reads, in one-letter code: Thymidylate kinase (214 aa).

12 to 19 (GGEGAGKS) lines the ATP pocket.

Belongs to the thymidylate kinase family.

It carries out the reaction dTMP + ATP = dTDP + ADP. Its function is as follows. Phosphorylation of dTMP to form dTDP in both de novo and salvage pathways of dTTP synthesis. The chain is Thymidylate kinase from Gluconobacter oxydans (strain 621H) (Gluconobacter suboxydans).